The primary structure comprises 25 residues: Arginine attenuator peptide (25 aa).

The protein belongs to the arginine attenuator peptide family.

Arginine attenuator peptide (AAP) that has a regulatory role in the production of arginine-specific carbamoyl phosphate synthetase. Encoded by an upstream open reading frame (uORF) within the 5'-leader region of arginine-specific carbamoyl phosphate synthetase small chain (CPA1) mRNA, it attenuates the translation of the downstream CPA1 ORF. In the presence of high concentrations of arginine, ribosomes translating the uORF encoding AAP stall at the termination codon, resulting in reduced translation from the downstream CPA1 initiation codon. This Saccharomyces cerevisiae (strain ATCC 204508 / S288c) (Baker's yeast) protein is Arginine attenuator peptide.